The primary structure comprises 393 residues: Leucine aminopeptidase 1 (393 aa).

The N-terminal stretch at M1 to A18 is a signal peptide. Residues R19 to S84 constitute a propeptide that is removed on maturation. N176 carries an N-linked (GlcNAc...) asparagine glycan. The Zn(2+) site is built by H184, D202, E241, and D268. C317 and C321 are disulfide-bonded. H350 provides a ligand contact to Zn(2+).

It belongs to the peptidase M28 family. M28E subfamily. As to quaternary structure, monomer. Requires Zn(2+) as cofactor.

Its subcellular location is the secreted. In terms of biological role, extracellular aminopeptidase that allows assimilation of proteinaceous substrates. The chain is Leucine aminopeptidase 1 (LAP1) from Metarhizium robertsii (strain ARSEF 23 / ATCC MYA-3075) (Metarhizium anisopliae (strain ARSEF 23)).